The sequence spans 516 residues: 1-pyrroline-5-carboxylate dehydrogenase (516 aa).

Catalysis depends on residues E287 and C321.

It belongs to the aldehyde dehydrogenase family. RocA subfamily.

The catalysed reaction is L-glutamate 5-semialdehyde + NAD(+) + H2O = L-glutamate + NADH + 2 H(+). The protein operates within amino-acid degradation; L-proline degradation into L-glutamate; L-glutamate from L-proline: step 2/2. This chain is 1-pyrroline-5-carboxylate dehydrogenase, found in Bacillus licheniformis (strain ATCC 14580 / DSM 13 / JCM 2505 / CCUG 7422 / NBRC 12200 / NCIMB 9375 / NCTC 10341 / NRRL NRS-1264 / Gibson 46).